Reading from the N-terminus, the 436-residue chain is RNA polymerase sigma-54 factor (436 aa).

Positions 324 to 343 (TLREVADCLSLHESTVSRAI) form a DNA-binding region, H-T-H motif. The RPON box signature appears at 413–421 (SRRTVAKYR).

It belongs to the sigma-54 factor family. Interacts transiently with the RNAP core.

In terms of biological role, sigma factors are initiation factors that promote the attachment of RNA polymerase (RNAP) to specific initiation sites and are then released. This sigma factor is responsible for the expression of the levanase operon. The open complex (sigma-54 and core RNA polymerase) serves as the receptor for receipt of the melting signal from the remotely bound activator protein LevR for the expression of the levanase operon. Associates with the RNAP core only in stationary phase cells. In Bacillus subtilis (strain 168), this protein is RNA polymerase sigma-54 factor (sigL).